A 95-amino-acid chain; its full sequence is Large ribosomal subunit protein uL23 (95 aa).

The protein belongs to the universal ribosomal protein uL23 family. As to quaternary structure, part of the 50S ribosomal subunit. Contacts protein L29, and trigger factor when it is bound to the ribosome.

Functionally, one of the early assembly proteins it binds 23S rRNA. One of the proteins that surrounds the polypeptide exit tunnel on the outside of the ribosome. Forms the main docking site for trigger factor binding to the ribosome. In Desulforudis audaxviator (strain MP104C), this protein is Large ribosomal subunit protein uL23.